A 291-amino-acid chain; its full sequence is MANNTLHRYLFEDLSVRGELVQLDDAYQQIISSKEYPKPVQNLLGELLVATTLLTATLKFEGSITLQLQGDGPVSLAVINGDNNQKVRGVARFEGDIAEDATLHQLMGRGYLVITITPKDGERYQGVVALEGENLAQCFEGYFERSEQLKTRLWLRLGEYEGKPHAAGMLLQVMPDGTGSENDFEHLEQLTDTIKNEELFGLPAEDVLYRLYNQDKVQLFEPQDVEFFCGCSRERSGGAIVTIDRAEVDDIIKTEGKISLHCDYCGTSYDFDSIDVANLFEQATSGNDTVH.

Cystine bridges form between Cys229–Cys231 and Cys262–Cys265.

This sequence belongs to the HSP33 family. Post-translationally, under oxidizing conditions two disulfide bonds are formed involving the reactive cysteines. Under reducing conditions zinc is bound to the reactive cysteines and the protein is inactive.

The protein resides in the cytoplasm. Redox regulated molecular chaperone. Protects both thermally unfolding and oxidatively damaged proteins from irreversible aggregation. Plays an important role in the bacterial defense system toward oxidative stress. The polypeptide is 33 kDa chaperonin (Aliivibrio fischeri (strain ATCC 700601 / ES114) (Vibrio fischeri)).